Here is an 892-residue protein sequence, read N- to C-terminus: Protein BNI4 (892 aa).

A phosphoserine mark is found at S43 and S133. Disordered stretches follow at residues 185 to 287 (DFLS…EDTS) and 305 to 387 (KPVI…QDTE). A compositionally biased stretch (basic and acidic residues) spans 208-223 (TILERDNNLPVKREEN). Polar residues-rich tracts occupy residues 224-236 (TIINSETESTTHS) and 270-280 (DSSAQRTTSAG). Phosphoserine is present on S281. Residues 309–335 (GNNSVTNEKNKMSSSSTFSMNIQTSLK) show a composition bias toward polar residues. Residues 346–356 (SSSSIFNSFLK) show a composition bias toward low complexity. Basic and acidic residues predominate over residues 357–371 (GKIETSDSPRKEPMR). A phosphoserine mark is found at S364 and S394. T410 is subject to Phosphothreonine. 3 positions are modified to phosphoserine: S476, S500, and S503. Disordered regions lie at residues 506 to 526 (RTRSTKSNKRSSMNSQRRSLT), 618 to 644 (SDEEKTEVERDVPKPREEPLKKDSERQ), and 685 to 734 (YATE…GDER). S618 carries the post-translational modification Phosphoserine. The segment covering 624 to 643 (EVERDVPKPREEPLKKDSER) has biased composition (basic and acidic residues). T703 carries the post-translational modification Phosphothreonine. The span at 707 to 719 (RNNKEDSYKERET) shows a compositional bias: basic and acidic residues. 2 positions are modified to phosphoserine: S746 and S825.

In terms of assembly, may interact with CHS3 and seems to be an adapter (along with SKT5) to link CHS3 to septins.

This chain is Protein BNI4 (BNI4), found in Saccharomyces cerevisiae (strain ATCC 204508 / S288c) (Baker's yeast).